The chain runs to 136 residues: Large ribosomal subunit protein uL16 (136 aa).

Belongs to the universal ribosomal protein uL16 family. As to quaternary structure, part of the 50S ribosomal subunit.

Binds 23S rRNA and is also seen to make contacts with the A and possibly P site tRNAs. In Ehrlichia chaffeensis (strain ATCC CRL-10679 / Arkansas), this protein is Large ribosomal subunit protein uL16.